The chain runs to 530 residues: UDP-glucuronosyltransferase 1A8 (530 aa).

Residues 1 to 25 form the signal peptide; sequence MAPSGCPPSLPLCVCLFLASGFAQA. Residues asparagine 71, asparagine 292, and asparagine 430 are each glycosylated (N-linked (GlcNAc...) asparagine). A helical transmembrane segment spans residues 488–504; sequence VIGFLLAIVLTVVFIVY.

This sequence belongs to the UDP-glycosyltransferase family. Homodimers. Homooligomer. Interacts with UGT1A1, UGT1A3, UGT1A4, UGT1A6, UGT1A7, UGT1A8, UGT1A9 and UGT1A10 to form heterodimers.

It localises to the endoplasmic reticulum membrane. It carries out the reaction glucuronate acceptor + UDP-alpha-D-glucuronate = acceptor beta-D-glucuronoside + UDP + H(+). The enzyme catalyses 17beta-estradiol + UDP-alpha-D-glucuronate = 17beta-estradiol 3-O-(beta-D-glucuronate) + UDP + H(+). It catalyses the reaction 17alpha-estradiol + UDP-alpha-D-glucuronate = 17alpha-estradiol 3-O-(beta-D-glucuronate) + UDP + H(+). The catalysed reaction is estrone + UDP-alpha-D-glucuronate = estrone 3-O-(beta-D-glucuronate) + UDP + H(+). It carries out the reaction 16alpha,17alpha-estriol + UDP-alpha-D-glucuronate = 16alpha,17alpha-estriol 3-O-(beta-D-glucuronate) + UDP + H(+). The enzyme catalyses 2-hydroxy-17beta-estradiol + UDP-alpha-D-glucuronate = 2-hydroxy-17beta-estradiol 3-O-(beta-D-glucuronate) + UDP + H(+). It catalyses the reaction 2-hydroxy-17beta-estradiol + UDP-alpha-D-glucuronate = 17beta-estradiol 2-O-(beta-D-glucuronate) + UDP + H(+). The catalysed reaction is 2-hydroxyestrone + UDP-alpha-D-glucuronate = 2-hydroxyestrone 3-O-(beta-D-glucuronate) + UDP + H(+). It carries out the reaction 4-hydroxy-17beta-estradiol + UDP-alpha-D-glucuronate = 4-hydroxy-17beta-estradiol 3-O-(beta-D-glucuronate) + UDP + H(+). The enzyme catalyses 4-hydroxy-17beta-estradiol + UDP-alpha-D-glucuronate = 17beta-estradiol 4-O-(beta-D-glucuronate) + UDP + H(+). It catalyses the reaction 4-hydroxyestrone + UDP-alpha-D-glucuronate = 4-hydroxyestrone 3-O-(beta-D-glucuronate) + UDP + H(+). The catalysed reaction is 4-hydroxyestrone + UDP-alpha-D-glucuronate = estrone 4-O-(beta-D-glucuronate) + UDP + H(+). It carries out the reaction 2-methoxy-17beta-estradiol + UDP-alpha-D-glucuronate = 2-methoxy-17beta-estradiol 3-O-(beta-D-glucuronate) + UDP + H(+). The enzyme catalyses 2-methoxyestrone + UDP-alpha-D-glucuronate = 2-methoxyestrone 3-O-(beta-D-glucuronate) + UDP + H(+). It catalyses the reaction 4-methoxy-17beta-estradiol + UDP-alpha-D-glucuronate = 4-methoxy-17beta-estradiol 3-O-(beta-D-glucuronate) + UDP + H(+). The catalysed reaction is 4-methoxyestrone + UDP-alpha-D-glucuronate = 4-methoxyestrone 3-O-(beta-D-glucuronate) + UDP + H(+). It carries out the reaction 17beta-hydroxy-5alpha-androstan-3-one + UDP-alpha-D-glucuronate = 5alpha-dihydrotestosterone 17-O-(beta-D-glucuronate) + UDP + H(+). The enzyme catalyses 5alpha-dihydrotestosterone 17-O-(beta-D-glucuronate) + UDP-alpha-D-glucuronate = 5alpha-dihydrotestosterone 17-O-[beta-D-glucuronosyl-(1-&gt;2)-glucuronate] + UDP + H(+). It catalyses the reaction prunetin + UDP-alpha-D-glucuronate = prunetin-4'-O-beta-D-glucuronide + UDP. The catalysed reaction is prunetin + UDP-alpha-D-glucuronate = prunetin-5-O-beta-D-glucuronide + UDP. It carries out the reaction (E)-ferulate + UDP-alpha-D-glucuronate = (E)-4-O-(beta-D-glucuronosyl)-ferulate + UDP + H(+). The enzyme catalyses (E)-ferulate + UDP-alpha-D-glucuronate = (E)-ferulic acid beta-D-glucuronate ester + UDP. It catalyses the reaction candesartan + UDP-alpha-D-glucuronate = candesartan O-beta-D-glucuronoside + UDP. The catalysed reaction is mycophenolate + UDP-alpha-D-glucuronate = mycophenolate 7-O-beta-D-glucuronide + UDP + H(+). Its function is as follows. UDP-glucuronosyltransferase (UGT) that catalyzes phase II biotransformation reactions in which lipophilic substrates are conjugated with glucuronic acid to increase the metabolite's water solubility, thereby facilitating excretion into either the urine or bile. Essential for the elimination and detoxification of drugs, xenobiotics and endogenous compounds. Catalyzes the glucuronidation of endogenous steroid hormones such as androgens and estrogens. Produces dihydrotestosterone (DHT) diglucuronide from the DHT after two subsequent glucoronidation steps. Involved in the glucuronidation of the phytochemical ferulic acid at the phenolic or the carboxylic acid group. Also catalyzes the glucuronidation of the isoflavones genistein, daidzein, glycitein, formononetin, biochanin A and prunetin, which are phytoestrogens with anticancer and cardiovascular properties. Involved in the glucuronidation of the AGTR1 angiotensin receptor antagonist caderastan, a drug which can inhibit the effect of angiotensin II. Also metabolizes mycophenolate, an immunosuppressive agent. This Rattus norvegicus (Rat) protein is UDP-glucuronosyltransferase 1A8.